Consider the following 333-residue polypeptide: Low specificity L-threonine aldolase (333 aa).

K197 is modified (N6-(pyridoxal phosphate)lysine).

The protein belongs to the threonine aldolase family. Homotetramer. Pyridoxal 5'-phosphate is required as a cofactor.

It carries out the reaction L-threonine = acetaldehyde + glycine. The enzyme catalyses L-allo-threonine = acetaldehyde + glycine. Catalyzes the cleavage of L-allo-threonine and L-threonine to glycine and acetaldehyde. L-threo-phenylserine and L-erythro-phenylserine are also good substrates. This chain is Low specificity L-threonine aldolase (ltaE), found in Escherichia coli (strain K12).